Consider the following 218-residue polypeptide: Enhancer of split M2 protein (218 aa).

Low complexity predominate over residues 1–25; the sequence is MYLDTKNLTASSTSALTAATASNSK. Disordered stretches follow at residues 1 to 30, 64 to 86, and 137 to 164; these read MYLDTKNLTASSTSALTAATASNSKSTRRM, NTQQQQQQQQQELLIEDDTKSTP, and GRNCQHRHHSSSNINSSSSSSNMNSSSA. Residues 147-163 are compositionally biased toward low complexity; that stretch reads SSNINSSSSSSNMNSSS.

In terms of biological role, part of the Notch signaling pathway. The sequence is that of Enhancer of split M2 protein from Drosophila melanogaster (Fruit fly).